Consider the following 239-residue polypeptide: Methylthioribulose-1-phosphate dehydratase (239 aa).

A substrate-binding site is contributed by Cys94. Zn(2+)-binding residues include His112 and His114. The active-site Proton donor/acceptor is Glu136. Position 192 (His192) interacts with Zn(2+).

The protein belongs to the aldolase class II family. MtnB subfamily. Zn(2+) serves as cofactor.

The protein localises to the cytoplasm. The enzyme catalyses 5-(methylsulfanyl)-D-ribulose 1-phosphate = 5-methylsulfanyl-2,3-dioxopentyl phosphate + H2O. Its pathway is amino-acid biosynthesis; L-methionine biosynthesis via salvage pathway; L-methionine from S-methyl-5-thio-alpha-D-ribose 1-phosphate: step 2/6. Its function is as follows. Catalyzes the dehydration of methylthioribulose-1-phosphate (MTRu-1-P) into 2,3-diketo-5-methylthiopentyl-1-phosphate (DK-MTP-1-P). Functions in the methionine salvage pathway. May play a role in apoptosis. The protein is Methylthioribulose-1-phosphate dehydratase of Xenopus tropicalis (Western clawed frog).